The primary structure comprises 360 residues: Peptide chain release factor 1 (360 aa).

Residue Q235 is modified to N5-methylglutamine.

It belongs to the prokaryotic/mitochondrial release factor family. Post-translationally, methylated by PrmC. Methylation increases the termination efficiency of RF1.

The protein localises to the cytoplasm. Its function is as follows. Peptide chain release factor 1 directs the termination of translation in response to the peptide chain termination codons UAG and UAA. In Cupriavidus taiwanensis (strain DSM 17343 / BCRC 17206 / CCUG 44338 / CIP 107171 / LMG 19424 / R1) (Ralstonia taiwanensis (strain LMG 19424)), this protein is Peptide chain release factor 1.